Reading from the N-terminus, the 505-residue chain is ATP synthase subunit alpha (505 aa).

171–178 (GDRQTGKT) contributes to the ATP binding site.

This sequence belongs to the ATPase alpha/beta chains family. As to quaternary structure, F-type ATPases have 2 components, CF(1) - the catalytic core - and CF(0) - the membrane proton channel. CF(1) has five subunits: alpha(3), beta(3), gamma(1), delta(1), epsilon(1). CF(0) has three main subunits: a(1), b(2) and c(9-12). The alpha and beta chains form an alternating ring which encloses part of the gamma chain. CF(1) is attached to CF(0) by a central stalk formed by the gamma and epsilon chains, while a peripheral stalk is formed by the delta and b chains.

The protein localises to the cell inner membrane. The enzyme catalyses ATP + H2O + 4 H(+)(in) = ADP + phosphate + 5 H(+)(out). Produces ATP from ADP in the presence of a proton gradient across the membrane. The alpha chain is a regulatory subunit. The protein is ATP synthase subunit alpha of Nitratiruptor sp. (strain SB155-2).